A 95-amino-acid polypeptide reads, in one-letter code: UPF0358 protein BA_4159/GBAA_4159/BAS3861 (95 aa).

This sequence belongs to the UPF0358 family.

In Bacillus anthracis, this protein is UPF0358 protein BA_4159/GBAA_4159/BAS3861.